Here is a 217-residue protein sequence, read N- to C-terminus: Probable GTP-binding protein EngB (217 aa).

Positions 33 to 217 constitute an EngB-type G domain; that stretch reads GPTEIAFAGR…RAAIELAVTR (185 aa). GTP-binding positions include 41–48, 68–72, 95–98, 162–165, and 196–198; these read GRSNVGKS, GRTQE, DMPG, TKTD, and TSS. Residues Ser-48 and Thr-70 each coordinate Mg(2+).

This sequence belongs to the TRAFAC class TrmE-Era-EngA-EngB-Septin-like GTPase superfamily. EngB GTPase family. Mg(2+) serves as cofactor.

Necessary for normal cell division and for the maintenance of normal septation. This chain is Probable GTP-binding protein EngB, found in Rhizobium meliloti (strain 1021) (Ensifer meliloti).